The sequence spans 252 residues: Glucosamine-6-phosphate deaminase (252 aa).

Catalysis depends on aspartate 64, which acts as the Proton acceptor; for enolization step. Residue asparagine 130 is the For ring-opening step of the active site. Residue histidine 132 is the Proton acceptor; for ring-opening step of the active site. The active-site For ring-opening step is glutamate 137.

The protein belongs to the glucosamine/galactosamine-6-phosphate isomerase family. NagB subfamily.

It catalyses the reaction alpha-D-glucosamine 6-phosphate + H2O = beta-D-fructose 6-phosphate + NH4(+). The protein operates within amino-sugar metabolism; N-acetylneuraminate degradation; D-fructose 6-phosphate from N-acetylneuraminate: step 5/5. Functionally, catalyzes the reversible isomerization-deamination of glucosamine 6-phosphate (GlcN6P) to form fructose 6-phosphate (Fru6P) and ammonium ion. The sequence is that of Glucosamine-6-phosphate deaminase from Exiguobacterium sibiricum (strain DSM 17290 / CCUG 55495 / CIP 109462 / JCM 13490 / 255-15).